A 357-amino-acid chain; its full sequence is GTPase Obg (357 aa).

The 159-residue stretch at 1–159 (MKFVDEAEIQ…RTLKLELKLL (159 aa)) folds into the Obg domain. In terms of domain architecture, OBG-type G spans 160-343 (ADIGMLGFPN…IMKSAMTLFE (184 aa)). GTP contacts are provided by residues 166–173 (GFPNVGKS), 191–195 (FTTLY), 213–216 (DVPG), 293–296 (NKAD), and 324–326 (SAV). 2 residues coordinate Mg(2+): S173 and T193.

It belongs to the TRAFAC class OBG-HflX-like GTPase superfamily. OBG GTPase family. Monomer. It depends on Mg(2+) as a cofactor.

It is found in the cytoplasm. In terms of biological role, an essential GTPase which binds GTP, GDP and possibly (p)ppGpp with moderate affinity, with high nucleotide exchange rates and a fairly low GTP hydrolysis rate. Plays a role in control of the cell cycle, stress response, ribosome biogenesis and in those bacteria that undergo differentiation, in morphogenesis control. The chain is GTPase Obg from Xylella fastidiosa (strain M12).